Consider the following 244-residue polypeptide: uncharacterized protein (244 aa).

The HTH gntR-type domain maps to 12-80; the sequence is VALWRQIADR…QGRGTMIERK (69 aa). The segment at residues 40–59 is a DNA-binding region (H-T-H motif); sequence ETALAAEFGVNRHTVRSALA.

This is an uncharacterized protein from Rhizobium meliloti (strain 1021) (Ensifer meliloti).